The sequence spans 345 residues: Phosphate acyltransferase (345 aa).

It belongs to the PlsX family. Homodimer. Probably interacts with PlsY.

The protein localises to the cytoplasm. It carries out the reaction a fatty acyl-[ACP] + phosphate = an acyl phosphate + holo-[ACP]. Its pathway is lipid metabolism; phospholipid metabolism. Its function is as follows. Catalyzes the reversible formation of acyl-phosphate (acyl-PO(4)) from acyl-[acyl-carrier-protein] (acyl-ACP). This enzyme utilizes acyl-ACP as fatty acyl donor, but not acyl-CoA. In Trichlorobacter lovleyi (strain ATCC BAA-1151 / DSM 17278 / SZ) (Geobacter lovleyi), this protein is Phosphate acyltransferase.